A 143-amino-acid polypeptide reads, in one-letter code: uncharacterized protein (143 aa).

A helical transmembrane segment spans residues 4 to 24; that stretch reads FGIVALSIICSIAFLFVAYGV. Residues 97-143 are disordered; that stretch reads TVPFVNTEAPPPRLSSSFSRQSGENAETQSQVSASPFNDKNSPYVQE. A compositionally biased stretch (polar residues) spans 110–143; sequence LSSSFSRQSGENAETQSQVSASPFNDKNSPYVQE.

The protein localises to the golgi apparatus membrane. This is an uncharacterized protein from Schizosaccharomyces pombe (strain 972 / ATCC 24843) (Fission yeast).